The sequence spans 100 residues: Mitochondrial import inner membrane translocase subunit Tim10 B (100 aa).

Positions 25–49 (CFQRCVPSLHHRALDAEEEACLHSC) match the Twin CX3C motif motif. 2 disulfides stabilise this stretch: cysteine 25–cysteine 49 and cysteine 29–cysteine 45.

Belongs to the small Tim family. Component of the TIM22 complex, which core is composed of TIMM22, associated with TIMM10 (TIMM10A and/or TIMM10B), TIMM9, AGK and TIMM29.

Its subcellular location is the mitochondrion inner membrane. In terms of biological role, component of the TIM22 complex, a complex that mediates the import and insertion of multi-pass transmembrane proteins into the mitochondrial inner membrane. The TIM22 complex forms a twin-pore translocase that uses the membrane potential as the external driving force. In the TIM22 complex, it may act as a docking point for the soluble 70 kDa complex that guides the target proteins in transit through the aqueous mitochondrial intermembrane space. The polypeptide is Mitochondrial import inner membrane translocase subunit Tim10 B (Timm10b) (Rattus norvegicus (Rat)).